Reading from the N-terminus, the 93-residue chain is Small ribosomal subunit protein uS19 (93 aa).

Disordered stretches follow at residues Met1–Lys25 and Phe74–Arg93. Composition is skewed to basic and acidic residues over residues His14 to Asn23 and Arg81 to Arg93.

The protein belongs to the universal ribosomal protein uS19 family.

Functionally, protein S19 forms a complex with S13 that binds strongly to the 16S ribosomal RNA. This is Small ribosomal subunit protein uS19 from Beutenbergia cavernae (strain ATCC BAA-8 / DSM 12333 / CCUG 43141 / JCM 11478 / NBRC 16432 / NCIMB 13614 / HKI 0122).